The sequence spans 349 residues: Glycerol-3-phosphate dehydrogenase [NAD(+)], cytoplasmic (349 aa).

NAD(+) is bound by residues glycine 10–glycine 15, lysine 120, and alanine 153. Lysine 120 contacts substrate. Serine 154 carries the phosphoserine modification. Lysine 204 serves as the catalytic Proton acceptor. Arginine 269 lines the NAD(+) pocket. Arginine 269 to asparagine 270 is a substrate binding site. Lysine 289 is subject to N6-succinyllysine. The NAD(+) site is built by lysine 296 and glutamine 298. At tyrosine 326 the chain carries Phosphotyrosine.

This sequence belongs to the NAD-dependent glycerol-3-phosphate dehydrogenase family. Homodimer.

It localises to the cytoplasm. It carries out the reaction sn-glycerol 3-phosphate + NAD(+) = dihydroxyacetone phosphate + NADH + H(+). Its function is as follows. Has glycerol-3-phosphate dehydrogenase activity. The polypeptide is Glycerol-3-phosphate dehydrogenase [NAD(+)], cytoplasmic (GPD1) (Oryctolagus cuniculus (Rabbit)).